The chain runs to 402 residues: Arginine deiminase (402 aa).

Cysteine 392 functions as the Amidino-cysteine intermediate in the catalytic mechanism.

This sequence belongs to the arginine deiminase family.

It localises to the cytoplasm. The enzyme catalyses L-arginine + H2O = L-citrulline + NH4(+). The protein operates within amino-acid degradation; L-arginine degradation via ADI pathway; carbamoyl phosphate from L-arginine: step 1/2. In Mycolicibacterium gilvum (strain PYR-GCK) (Mycobacterium gilvum (strain PYR-GCK)), this protein is Arginine deiminase.